We begin with the raw amino-acid sequence, 343 residues long: Transcription factor MYB83 (343 aa).

Over residues 1-16 (MMMRKPDITTIRDKGK) the composition is skewed to basic and acidic residues. The tract at residues 1-33 (MMMRKPDITTIRDKGKPNHACGGNNNKPKLRKG) is disordered. 2 consecutive HTH myb-type domains span residues 27 to 79 (KPKL…INYL) and 80 to 134 (RPDL…KKRL). 2 DNA-binding regions (H-T-H motif) span residues 55-79 (WSDIARNAGLLRCGKSCRLRWINYL) and 107-130 (WSQIATRLPGRTDNEIKNFWNSTL). A disordered region spans residues 134–172 (LKNNSNNNTSSGSSPNNSNSNSLDPRDQHVDMGGNSTSL). The segment covering 136-155 (NNSNNNTSSGSSPNNSNSNS) has biased composition (low complexity).

In terms of tissue distribution, expressed specifically in fiber and vessel cells that are undergoing secondary wall thickening in floral stems. Expressed in vessels but not in xylary fibers in the developing secondary xylem of roots.

Its subcellular location is the nucleus. Transcription factor that acts as a molecular switch in the NAC012/SND1-mediated transcriptional network regulating secondary wall biosynthesis. Is directly activated by NAC012/SND1 and its close homologs, including NAC043/NST1, NAC066/NST2, NAC101/VND6 and NAC030/VND7. Is required for functional expression of a number of secondary wall-associated transcription factors and secondary wall biosynthetic genes involved in cellulose, xylan and lignin synthesis. Functions redundantly with MYB46 in the transcriptional regulatory cascade leading to secondary wall formation in fibers and vessels. Transcription activator that binds to the DNA consensus sequence 5'-ACC[AT]A[AC][TC]-3', designated as the secondary wall MYB-responsive element (SMRE). Regulates directly numerous transcription factors and a number of genes involved in secondary wall biosynthesis that contain SMRE elements in their promoters. The sequence is that of Transcription factor MYB83 from Arabidopsis thaliana (Mouse-ear cress).